A 503-amino-acid chain; its full sequence is Glycosyltransferase family 92 protein ZK381.2 (503 aa).

A helical transmembrane segment spans residues 7-27 (YKPCLLIILIFNSVILLFILI). Residues 156–441 (KPVIICISPQ…FKCYFDSFYK (286 aa)) enclose the GT92 domain.

This sequence belongs to the glycosyltransferase 92 family.

The protein resides in the membrane. This chain is Glycosyltransferase family 92 protein ZK381.2, found in Caenorhabditis elegans.